Reading from the N-terminus, the 366-residue chain is Ubiquitin carboxyl-terminal hydrolase 46 (366 aa).

Residues 35–365 form the USP domain; it reads FGLVNFGNTC…SGYILFYQSR (331 aa). C44 (nucleophile) is an active-site residue. Residues C182, C185, C229, and C232 each coordinate Zn(2+). Residue H313 is the Proton acceptor of the active site.

It belongs to the peptidase C19 family. USP12/USP46 subfamily. As to quaternary structure, interacts with WDR48. Interacts with WDR20. Interacts with DMWD. Component of the USP46/WDR20/WDR48 deubiquitinating complex. Detected in lung and spleen, and at lower levels in brain, kidney, testis and liver.

The protein localises to the cytoplasm. The catalysed reaction is Thiol-dependent hydrolysis of ester, thioester, amide, peptide and isopeptide bonds formed by the C-terminal Gly of ubiquitin (a 76-residue protein attached to proteins as an intracellular targeting signal).. In terms of biological role, deubiquitinating enzyme that plays a role in behavior, possibly by regulating GABA action. May act by mediating the deubiquitination of GAD1/GAD67. Has almost no deubiquitinating activity by itself and requires the interaction with WDR48 to have a high activity. Not involved in deubiquitination of monoubiquitinated FANCD2. In Rattus norvegicus (Rat), this protein is Ubiquitin carboxyl-terminal hydrolase 46.